A 128-amino-acid chain; its full sequence is Group 2 truncated hemoglobin GlbO (128 aa).

Residues 23-36 (YAQVAEDEVLRRVY) constitute a cross-link (isodityrosine (Tyr-Tyr)). Residue Tyr-36 is modified to 3',4'-dihydroxyphenylalanine. Position 75 (His-75) interacts with heme.

This sequence belongs to the truncated hemoglobin family. Group II subfamily. As to quaternary structure, homododecamer. It depends on heme as a cofactor. In terms of processing, contains L-DOPA (3',4'-dihydroxyphenylalanine).

In Mycobacterium bovis (strain ATCC BAA-935 / AF2122/97), this protein is Group 2 truncated hemoglobin GlbO (glbO).